Reading from the N-terminus, the 285-residue chain is Glycine--tRNA ligase alpha subunit (285 aa).

It belongs to the class-II aminoacyl-tRNA synthetase family. In terms of assembly, tetramer of two alpha and two beta subunits.

The protein resides in the cytoplasm. It carries out the reaction tRNA(Gly) + glycine + ATP = glycyl-tRNA(Gly) + AMP + diphosphate. The chain is Glycine--tRNA ligase alpha subunit from Granulibacter bethesdensis (strain ATCC BAA-1260 / CGDNIH1).